Reading from the N-terminus, the 142-residue chain is Protein transport protein BET1 (142 aa).

Residues 1-36 (MSSRFAGGNAYQRDTGRTQLFGPADGSNSLDDNVSS) are disordered. Over 1–117 (MSSRFAGGNA…FGNMMEMARR (117 aa)) the chain is Cytoplasmic. The segment covering 26-36 (GSNSLDDNVSS) has biased composition (polar residues). In terms of domain architecture, t-SNARE coiled-coil homology spans 52 to 114 (ASLESQSEEQ…KRTFGNMMEM (63 aa)). Residues 118 to 141 (SGISIKTWLIIFFMVGVLFFWVWI) traverse the membrane as a helical; Anchor for type IV membrane protein segment. Residue threonine 142 is a topological domain, vesicular.

The protein belongs to the BET1 family. As to quaternary structure, component of a SNARE complex consisting of SED5, BOS1, BET1 and SEC22 or YKT6. Interacts with SEC24.

The protein localises to the golgi apparatus membrane. It localises to the endoplasmic reticulum membrane. Its function is as follows. SNARE required for targeting and fusion of ER-derived transport vesicles with the Golgi complex. This is Protein transport protein BET1 (BET1) from Saccharomyces cerevisiae (strain ATCC 204508 / S288c) (Baker's yeast).